Consider the following 185-residue polypeptide: Protein GrpE (185 aa).

A disordered region spans residues 1–37 (MSEEKQTPEQEAEVEAQEEAVQADTEEVTQDEQSAFQ).

It belongs to the GrpE family. As to quaternary structure, homodimer.

Its subcellular location is the cytoplasm. Its function is as follows. Participates actively in the response to hyperosmotic and heat shock by preventing the aggregation of stress-denatured proteins, in association with DnaK and GrpE. It is the nucleotide exchange factor for DnaK and may function as a thermosensor. Unfolded proteins bind initially to DnaJ; upon interaction with the DnaJ-bound protein, DnaK hydrolyzes its bound ATP, resulting in the formation of a stable complex. GrpE releases ADP from DnaK; ATP binding to DnaK triggers the release of the substrate protein, thus completing the reaction cycle. Several rounds of ATP-dependent interactions between DnaJ, DnaK and GrpE are required for fully efficient folding. The protein is Protein GrpE of Bacillus pumilus (strain SAFR-032).